We begin with the raw amino-acid sequence, 273 residues long: 3-methyl-2-oxobutanoate hydroxymethyltransferase 2 (273 aa).

The Mg(2+) site is built by aspartate 50 and aspartate 89. 3-methyl-2-oxobutanoate contacts are provided by residues aspartate 50–serine 51, aspartate 89, and lysine 119. Glutamate 121 contributes to the Mg(2+) binding site. Glutamate 188 functions as the Proton acceptor in the catalytic mechanism.

The protein belongs to the PanB family. As to quaternary structure, homodecamer; pentamer of dimers. Mg(2+) serves as cofactor.

It is found in the cytoplasm. The catalysed reaction is 3-methyl-2-oxobutanoate + (6R)-5,10-methylene-5,6,7,8-tetrahydrofolate + H2O = 2-dehydropantoate + (6S)-5,6,7,8-tetrahydrofolate. The protein operates within cofactor biosynthesis; (R)-pantothenate biosynthesis; (R)-pantoate from 3-methyl-2-oxobutanoate: step 1/2. Functionally, catalyzes the reversible reaction in which hydroxymethyl group from 5,10-methylenetetrahydrofolate is transferred onto alpha-ketoisovalerate to form ketopantoate. The polypeptide is 3-methyl-2-oxobutanoate hydroxymethyltransferase 2 (Zymomonas mobilis subsp. mobilis (strain ATCC 31821 / ZM4 / CP4)).